The chain runs to 471 residues: ATP synthase subunit beta (471 aa).

154 to 161 (GGAGVGKT) is an ATP binding site.

The protein belongs to the ATPase alpha/beta chains family. In terms of assembly, F-type ATPases have 2 components, CF(1) - the catalytic core - and CF(0) - the membrane proton channel. CF(1) has five subunits: alpha(3), beta(3), gamma(1), delta(1), epsilon(1). CF(0) has three main subunits: a(1), b(2) and c(9-12). The alpha and beta chains form an alternating ring which encloses part of the gamma chain. CF(1) is attached to CF(0) by a central stalk formed by the gamma and epsilon chains, while a peripheral stalk is formed by the delta and b chains.

It localises to the cell membrane. The enzyme catalyses ATP + H2O + 4 H(+)(in) = ADP + phosphate + 5 H(+)(out). In terms of biological role, produces ATP from ADP in the presence of a proton gradient across the membrane. The catalytic sites are hosted primarily by the beta subunits. This Mesomycoplasma hyopneumoniae (strain 232) (Mycoplasma hyopneumoniae) protein is ATP synthase subunit beta.